The chain runs to 91 residues: Sm-like protein LSM6A (91 aa).

Positions 14–86 (TPADFLKSIR…VLYISTVNMT (73 aa)) constitute a Sm domain.

Belongs to the snRNP Sm proteins family. In terms of assembly, component of the heptameric LSM1-LSM7 complex that forms a seven-membered ring structure with a donut shape. The LSM subunits are arranged in the order LSM1, LSM2, LSM3, LSM6, LSM5, LSM7 and LSM4. Component of the heptameric LSM2-LSM8 complex that forms a seven-membered ring structure with a donut shape. The LSM subunits are arranged in the order LSM8, LSM2, LSM3, LSM6, LSM5, LSM7 and LSM4. LSM6A subunit interacts only with its two neighboring subunits, LSM3A or LSM3B and LSM5. Expressed in roots, leaves, stems, flowers and siliques.

It localises to the cytoplasm. The protein localises to the nucleus. Its function is as follows. Component of LSM protein complexes, which are involved in RNA processing. Component of the cytoplasmic LSM1-LSM7 complex which is involved in mRNA degradation by promoting decapping and leading to accurate 5'-3' mRNA decay. The cytoplasmic LSM1-LSM7 complex regulates developmental gene expression by the decapping of specific development-related transcripts. Component of the nuclear LSM2-LSM8 complex which is involved splicing nuclear mRNAs. LSM2-LSM8 binds directly to the U6 small nuclear RNAs (snRNAs) and is essential for accurate splicing of selected development-related mRNAs through the stabilization of the spliceosomal U6 snRNA. Plays a critical role in the regulation of development-related gene expression. The polypeptide is Sm-like protein LSM6A (Arabidopsis thaliana (Mouse-ear cress)).